The sequence spans 189 residues: Peptidyl-tRNA hydrolase (189 aa).

Tyr15 provides a ligand contact to tRNA. The Proton acceptor role is filled by His20. The tRNA site is built by Phe66, Asn68, and Asn114.

It belongs to the PTH family. As to quaternary structure, monomer.

It localises to the cytoplasm. It carries out the reaction an N-acyl-L-alpha-aminoacyl-tRNA + H2O = an N-acyl-L-amino acid + a tRNA + H(+). Functionally, hydrolyzes ribosome-free peptidyl-tRNAs (with 1 or more amino acids incorporated), which drop off the ribosome during protein synthesis, or as a result of ribosome stalling. In terms of biological role, catalyzes the release of premature peptidyl moieties from peptidyl-tRNA molecules trapped in stalled 50S ribosomal subunits, and thus maintains levels of free tRNAs and 50S ribosomes. The sequence is that of Peptidyl-tRNA hydrolase from Streptococcus pyogenes serotype M3 (strain ATCC BAA-595 / MGAS315).